Here is a 191-residue protein sequence, read N- to C-terminus: Casparian strip membrane protein 4 (191 aa).

The Cytoplasmic segment spans residues 1–27; the sequence is MKTGSVEAGEQASEDATPRRGKKLNRG. A helical transmembrane segment spans residues 28–48; sequence ILILDLVLRVFGAICTLGSAV. The Extracellular portion of the chain corresponds to 49–72; sequence AMGTTSQTLPSSSQFFRFRAKYND. The helical transmembrane segment at 73–93 threads the bilayer; the sequence is LPMFMFFAIANSIVCAYLVLS. At 94–110 the chain is on the cytoplasmic side; it reads LRLSIFHIIRSAGIITR. Residues 111–131 traverse the membrane as a helical segment; it reads IILVTFDMVMLVLLTCGASAA. Residues 132–160 lie on the Extracellular side of the membrane; sequence TSIVYLAHKGNASANWLPFCVRFSHFCNR. N-linked (GlcNAc...) asparagine glycosylation is present at Asn-142. Residues 161–181 traverse the membrane as a helical segment; the sequence is ISGSLIGSFFSIIIFMLLVIL. The Cytoplasmic segment spans residues 182-191; sequence SAVSQFSICN.

The protein belongs to the Casparian strip membrane proteins (CASP) family. In terms of assembly, homodimer and heterodimers.

It is found in the cell membrane. Regulates membrane-cell wall junctions and localized cell wall deposition. Required for establishment of the Casparian strip membrane domain (CSD) and the subsequent formation of Casparian strips, a cell wall modification of the root endodermis that determines an apoplastic barrier between the intraorganismal apoplasm and the extraorganismal apoplasm and prevents lateral diffusion. The sequence is that of Casparian strip membrane protein 4 from Ricinus communis (Castor bean).